The sequence spans 370 residues: tRNA-specific 2-thiouridylase MnmA (370 aa).

ATP-binding positions include 12-19 (GMSGGVDS) and leucine 38. Cysteine 105 acts as the Nucleophile in catalysis. Cysteines 105 and 204 form a disulfide. Position 129 (glycine 129) interacts with ATP. The interaction with tRNA stretch occupies residues 153-155 (KDQ). The Cysteine persulfide intermediate role is filled by cysteine 204. An interaction with tRNA region spans residues 310–311 (RY).

The protein belongs to the MnmA/TRMU family.

The protein resides in the cytoplasm. It carries out the reaction S-sulfanyl-L-cysteinyl-[protein] + uridine(34) in tRNA + AH2 + ATP = 2-thiouridine(34) in tRNA + L-cysteinyl-[protein] + A + AMP + diphosphate + H(+). In terms of biological role, catalyzes the 2-thiolation of uridine at the wobble position (U34) of tRNA, leading to the formation of s(2)U34. This Desulfitobacterium hafniense (strain Y51) protein is tRNA-specific 2-thiouridylase MnmA.